A 210-amino-acid polypeptide reads, in one-letter code: LexA repressor (210 aa).

The segment at residues 30–50 (RVEIAREIGFKSPNAAEEHLK) is a DNA-binding region (H-T-H motif). Active-site for autocatalytic cleavage activity residues include Ser-127 and Lys-164.

Belongs to the peptidase S24 family. As to quaternary structure, homodimer.

The enzyme catalyses Hydrolysis of Ala-|-Gly bond in repressor LexA.. In terms of biological role, represses a number of genes involved in the response to DNA damage (SOS response), including recA and lexA. In the presence of single-stranded DNA, RecA interacts with LexA causing an autocatalytic cleavage which disrupts the DNA-binding part of LexA, leading to derepression of the SOS regulon and eventually DNA repair. The protein is LexA repressor of Actinobacillus pleuropneumoniae serotype 5b (strain L20).